Reading from the N-terminus, the 105-residue chain is Large ribosomal subunit protein bL21 (105 aa).

It belongs to the bacterial ribosomal protein bL21 family. As to quaternary structure, part of the 50S ribosomal subunit. Contacts protein L20.

In terms of biological role, this protein binds to 23S rRNA in the presence of protein L20. This Desulfatibacillum aliphaticivorans protein is Large ribosomal subunit protein bL21.